Here is a 321-residue protein sequence, read N- to C-terminus: Anther-specific protein TA-29 (321 aa).

Positions 301–321 are disordered; the sequence is RSDEEEAHHQSKQHKDEDIIN.

As to expression, anther specific (tapetal cells).

The sequence is that of Anther-specific protein TA-29 (TA-29) from Nicotiana tabacum (Common tobacco).